Here is a 467-residue protein sequence, read N- to C-terminus: UDP-N-acetylmuramoylalanine--D-glutamate ligase (467 aa).

Residue 121-127 (GTNGKST) participates in ATP binding.

This sequence belongs to the MurCDEF family.

Its subcellular location is the cytoplasm. It catalyses the reaction UDP-N-acetyl-alpha-D-muramoyl-L-alanine + D-glutamate + ATP = UDP-N-acetyl-alpha-D-muramoyl-L-alanyl-D-glutamate + ADP + phosphate + H(+). Its pathway is cell wall biogenesis; peptidoglycan biosynthesis. Cell wall formation. Catalyzes the addition of glutamate to the nucleotide precursor UDP-N-acetylmuramoyl-L-alanine (UMA). The polypeptide is UDP-N-acetylmuramoylalanine--D-glutamate ligase (Brucella suis biovar 1 (strain 1330)).